The primary structure comprises 229 residues: Enolase-phosphatase E1 (229 aa).

Over residues 208–218 (DTQSTHRQVSS) the composition is skewed to polar residues. Residues 208 to 229 (DTQSTHRQVSSFDDIHPEQIPT) are disordered. Residues 220 to 229 (DDIHPEQIPT) are compositionally biased toward basic and acidic residues.

Belongs to the HAD-like hydrolase superfamily. MasA/MtnC family. In terms of assembly, monomer. Mg(2+) is required as a cofactor.

It catalyses the reaction 5-methylsulfanyl-2,3-dioxopentyl phosphate + H2O = 1,2-dihydroxy-5-(methylsulfanyl)pent-1-en-3-one + phosphate. It functions in the pathway amino-acid biosynthesis; L-methionine biosynthesis via salvage pathway; L-methionine from S-methyl-5-thio-alpha-D-ribose 1-phosphate: step 3/6. The protein operates within amino-acid biosynthesis; L-methionine biosynthesis via salvage pathway; L-methionine from S-methyl-5-thio-alpha-D-ribose 1-phosphate: step 4/6. Its function is as follows. Bifunctional enzyme that catalyzes the enolization of 2,3-diketo-5-methylthiopentyl-1-phosphate (DK-MTP-1-P) into the intermediate 2-hydroxy-3-keto-5-methylthiopentenyl-1-phosphate (HK-MTPenyl-1-P), which is then dephosphorylated to form the acireductone 1,2-dihydroxy-3-keto-5-methylthiopentene (DHK-MTPene). The chain is Enolase-phosphatase E1 from Cronobacter sakazakii (strain ATCC BAA-894) (Enterobacter sakazakii).